We begin with the raw amino-acid sequence, 252 residues long: MKVIFNADDFGLTRGVNDGIVHAHLDGVVRSTTMMVGMPAEAHAVELANHLPELKVGLHLRFTAGRPLTEGQNLVGRDGDFTPYGQFWHRRDYDPIAIHNEAVAQVEYFLALGLNLSHIDSHHHAHTHPQFEPVIYDIARTYQVPLRSTGLAGEEEFGCRYHFTDHFYDKRVGHDSLIQHLLTLKEHYDVVEVMCHPAILDTALEACSGYAKQRELELAILTSDELKLSLRKHDIEVTDYSELIFAPLHSCV.

The Mg(2+) site is built by His-59 and His-122.

Belongs to the YdjC deacetylase family. Homodimer. The cofactor is Mg(2+).

Its function is as follows. Probably catalyzes the deacetylation of acetylated carbohydrates an important step in the degradation of oligosaccharides. The sequence is that of Carbohydrate deacetylase from Vibrio vulnificus (strain YJ016).